A 296-amino-acid chain; its full sequence is Porphobilinogen deaminase (296 aa).

Cys232 is subject to S-(dipyrrolylmethanemethyl)cysteine.

It belongs to the HMBS family. As to quaternary structure, monomer. Dipyrromethane serves as cofactor.

It carries out the reaction 4 porphobilinogen + H2O = hydroxymethylbilane + 4 NH4(+). The protein operates within porphyrin-containing compound metabolism; protoporphyrin-IX biosynthesis; coproporphyrinogen-III from 5-aminolevulinate: step 2/4. Tetrapolymerization of the monopyrrole PBG into the hydroxymethylbilane pre-uroporphyrinogen in several discrete steps. This is Porphobilinogen deaminase from Corynebacterium aurimucosum (strain ATCC 700975 / DSM 44827 / CIP 107346 / CN-1) (Corynebacterium nigricans).